The primary structure comprises 218 residues: Glutathione S-transferase Mu 7 (218 aa).

The GST N-terminal domain maps to 1–88 (MPMTLGYWDI…YLGRKHNLCG (88 aa)). Glutathione contacts are provided by residues 7 to 8 (YW), 46 to 50 (WLNEK), 59 to 60 (NL), and 72 to 73 (QS). Positions 90-208 (TEEERIRVDI…KTSRFLPRPM (119 aa)) constitute a GST C-terminal domain. Position 116 (Tyr116) interacts with substrate.

The protein belongs to the GST superfamily. Mu family. Homodimer.

It localises to the cytoplasm. The enzyme catalyses RX + glutathione = an S-substituted glutathione + a halide anion + H(+). Functionally, conjugation of reduced glutathione to a wide number of exogenous and endogenous hydrophobic electrophiles. The sequence is that of Glutathione S-transferase Mu 7 (Gstm7) from Mus musculus (Mouse).